The sequence spans 338 residues: Solute carrier family 35 member G6 (338 aa).

The segment at 1–25 is disordered; that stretch reads MAGSHPYLNPPDSTHPSPPSAPPSL. 9 helical membrane passes run 40-60, 67-87, 105-125, 160-180, 190-210, 221-241, 255-275, 281-301, and 310-330; these read LLVA…LSHM, LPSL…ALLL, YFYA…VQVV, CGLL…LWTL, ALGY…LLVY, TVAF…LFVL, CVGA…YAVT, LVCA…YYML, and IVGA…NLSC. The 126-residue stretch at 49-174 folds into the EamA 1 domain; the sequence is LPAGFVGPLS…SILGLIIIVG (126 aa). Positions 272–325 constitute an EamA 2 domain; sequence YAVTKAHPALVCAVLHSEVVVALILQYYMLHETVAPSDIVGAGVVLGSIAIITA.

It belongs to the SLC35G solute transporter family. As to expression, expressed in placenta and testis.

It is found in the membrane. The protein is Solute carrier family 35 member G6 (SLC35G6) of Homo sapiens (Human).